A 488-amino-acid polypeptide reads, in one-letter code: Glutamyl-tRNA(Gln) amidotransferase subunit A, mitochondrial (488 aa).

Active-site charge relay system residues include lysine 62 and serine 140. Serine 164 (acyl-ester intermediate) is an active-site residue. The interval 205-228 (GHDDNDPTSITPQTRERIQDRLSR) is disordered. Positions 218–227 (TRERIQDRLS) are enriched in basic and acidic residues.

It belongs to the amidase family. GatA subfamily. In terms of assembly, subunit of the heterotrimeric GatCAB amidotransferase (AdT) complex, composed of A, B and C subunits.

It is found in the mitochondrion. The enzyme catalyses L-glutamyl-tRNA(Gln) + L-glutamine + ATP + H2O = L-glutaminyl-tRNA(Gln) + L-glutamate + ADP + phosphate + H(+). Allows the formation of correctly charged Gln-tRNA(Gln) through the transamidation of misacylated Glu-tRNA(Gln) in the mitochondria. The reaction takes place in the presence of glutamine and ATP through an activated gamma-phospho-Glu-tRNA(Gln). The chain is Glutamyl-tRNA(Gln) amidotransferase subunit A, mitochondrial from Tuber melanosporum (strain Mel28) (Perigord black truffle).